We begin with the raw amino-acid sequence, 518 residues long: Protein translocase subunit SecD (518 aa).

The next 6 helical transmembrane spans lie at 9–29 (IVLSIICTVFAIICALPNFIQ), 356–376 (GKKAGLIGFVAVCIFMILSYG), 377–397 (VIGLFANIALILALLYILALL), 406–426 (LPGIAGIILTIGMAVDANVLI), 463–483 (LIVAFALYIFGVGAIKGFAVA), and 486–506 (IGIISSMFSAIIITKLLIDVW).

The protein belongs to the SecD/SecF family. SecD subfamily. As to quaternary structure, forms a complex with SecF. Part of the essential Sec protein translocation apparatus which comprises SecA, SecYEG and auxiliary proteins SecDF-YajC and YidC.

The protein resides in the cell inner membrane. Functionally, part of the Sec protein translocase complex. Interacts with the SecYEG preprotein conducting channel. SecDF uses the proton motive force (PMF) to complete protein translocation after the ATP-dependent function of SecA. This Rickettsia prowazekii (strain Madrid E) protein is Protein translocase subunit SecD.